We begin with the raw amino-acid sequence, 841 residues long: Translation initiation factor IF-2 (841 aa).

Residues 87–254 form a disordered region; sequence RKKKVFVQRS…KRNAHGFQSP (168 aa). The segment covering 96 to 135 has biased composition (basic and acidic residues); that stretch reads SPEEIEAERKREMDERRAVENAARQKAEEEAKRRAEEDAR. Positions 136–175 are enriched in low complexity; the sequence is SQPAASQSAPAAAEPVAAAEPVREAAPAAAPAPASAAPSA. Composition is skewed to basic and acidic residues over residues 176 to 217 and 225 to 234; these read DARK…EKAP and TTDEESDSFR. The span at 235–248 shows a compositional bias: basic residues; that stretch reads RGGRGKGKLKKRNA. Residues 341–510 form the tr-type G domain; sequence SRAPVVTVMG…LLQAEVLELK (170 aa). The tract at residues 350–357 is G1; the sequence is GHVDHGKT. GTP is bound at residue 350 to 357; it reads GHVDHGKT. Positions 375 to 379 are G2; it reads GITQH. Residues 396–399 are G3; it reads DTPG. GTP is bound by residues 396 to 400 and 450 to 453; these read DTPGH and NKID. The interval 450-453 is G4; that stretch reads NKID. Residues 486 to 488 are G5; sequence SAK.

This sequence belongs to the TRAFAC class translation factor GTPase superfamily. Classic translation factor GTPase family. IF-2 subfamily.

The protein localises to the cytoplasm. Its function is as follows. One of the essential components for the initiation of protein synthesis. Protects formylmethionyl-tRNA from spontaneous hydrolysis and promotes its binding to the 30S ribosomal subunits. Also involved in the hydrolysis of GTP during the formation of the 70S ribosomal complex. This Pseudomonas syringae pv. syringae (strain B728a) protein is Translation initiation factor IF-2.